We begin with the raw amino-acid sequence, 446 residues long: GTPase Der (446 aa).

EngA-type G domains are found at residues T2–P166 and I179–N354. Residues G8–S15, D55–F59, N118–D121, G185–S192, D232–I236, and N297–D300 each bind GTP. The 86-residue stretch at Q355–Q440 folds into the KH-like domain.

This sequence belongs to the TRAFAC class TrmE-Era-EngA-EngB-Septin-like GTPase superfamily. EngA (Der) GTPase family. Associates with the 50S ribosomal subunit.

GTPase that plays an essential role in the late steps of ribosome biogenesis. The protein is GTPase Der of Syntrophobacter fumaroxidans (strain DSM 10017 / MPOB).